A 317-amino-acid chain; its full sequence is mRNA 3'-end-processing protein yth-1 (317 aa).

The disordered stretch occupies residues 1-20 (MATTTQTTTNSLPSGAGGPQ). 5 consecutive C3H1-type zinc fingers follow at residues 51–78 (PADR…HVTA), 93–120 (GFGS…HEYN), 121–149 (LRKM…HIDP), 150–177 (LSRL…HFRR), and 179–202 (LCLY…HPRW). Over residues 202–217 (WTADKDMEKPRAKGEG) the composition is skewed to basic and acidic residues. Residues 202–317 (WTADKDMEKP…GRGGFRGKGH (116 aa)) are disordered. The span at 223 to 237 (QQQQQQQQQQHMGDA) shows a compositional bias: low complexity. The span at 253 to 288 (YMDRERERDRDNREREMMMQGRDRDGGGHDRHKDRF) shows a compositional bias: basic and acidic residues. The segment covering 289 to 301 (GGGGGGGGGGRGR) has biased composition (gly residues). The segment covering 302–317 (GGWRGRGRGGFRGKGH) has biased composition (basic residues).

It belongs to the CPSF4/YTH1 family.

It is found in the nucleus. Its function is as follows. Component of the cleavage factor I (CF I) involved in pre-mRNA 3'-end processing. The protein is mRNA 3'-end-processing protein yth-1 (yth-1) of Neurospora crassa (strain ATCC 24698 / 74-OR23-1A / CBS 708.71 / DSM 1257 / FGSC 987).